The following is a 156-amino-acid chain: Small ribosomal subunit protein uS7 (156 aa).

This sequence belongs to the universal ribosomal protein uS7 family. Part of the 30S ribosomal subunit. Contacts proteins S9 and S11.

Its function is as follows. One of the primary rRNA binding proteins, it binds directly to 16S rRNA where it nucleates assembly of the head domain of the 30S subunit. Is located at the subunit interface close to the decoding center, probably blocks exit of the E-site tRNA. The protein is Small ribosomal subunit protein uS7 of Aliivibrio fischeri (strain MJ11) (Vibrio fischeri).